A 100-amino-acid polypeptide reads, in one-letter code: Urease subunit gamma (100 aa).

The protein belongs to the urease gamma subunit family. Heterotrimer of UreA (gamma), UreB (beta) and UreC (alpha) subunits. Three heterotrimers associate to form the active enzyme.

It localises to the cytoplasm. It catalyses the reaction urea + 2 H2O + H(+) = hydrogencarbonate + 2 NH4(+). It participates in nitrogen metabolism; urea degradation; CO(2) and NH(3) from urea (urease route): step 1/1. This chain is Urease subunit gamma, found in Dinoroseobacter shibae (strain DSM 16493 / NCIMB 14021 / DFL 12).